The chain runs to 329 residues: Helicase VP6-A (329 aa).

2 disordered regions span residues 27 to 130 (INLV…TNGG) and 189 to 232 (DLRR…SEEP). Basic and acidic residues-rich tracts occupy residues 36 to 58 (EGGK…KDGE), 65 to 83 (GQKE…DRRI), and 96 to 109 (SGER…RGDG). Lys-110 is an ATP binding site. Gly residues predominate over residues 110–129 (KVGGGGGDADAGVGATGTNG). Composition is skewed to basic and acidic residues over residues 189-207 (DLRR…ERGG) and 215-232 (HGDA…SEEP).

It belongs to the reoviruses VP6 family. Homohexamer.

The protein resides in the virion. It catalyses the reaction ATP + H2O = ADP + phosphate + H(+). Functionally, ATP dependent RNA helicase essential for RNA packaging and viral transcription. Possesses ss- and dsRNA-binding capacity. The chain is Helicase VP6-A (Segment-9) from Antilocapra americana (Pronghorn).